The primary structure comprises 174 residues: uncharacterized protein (174 aa).

The protein to E.coli HemX C-terminal region.

This is an uncharacterized protein from Haemophilus influenzae (strain ATCC 51907 / DSM 11121 / KW20 / Rd).